The primary structure comprises 233 residues: Riboflavin kinase (233 aa).

The unknown stretch occupies residues methionine 1–glutamate 99. A riboflavin kinase region spans residues leucine 100–alanine 233. Glycine 109–arginine 114 contributes to the CDP binding site. 2 residues coordinate Mg(2+): threonine 138 and asparagine 140. FMN-binding residues include threonine 200 and glutamate 208. Valine 213 to arginine 216 is a binding site for CDP.

Belongs to the archaeal riboflavin kinase family. It depends on Mg(2+) as a cofactor.

It catalyses the reaction riboflavin + CTP = CDP + FMN + H(+). The protein operates within cofactor biosynthesis; FMN biosynthesis; FMN from riboflavin (CTP route): step 1/1. Functionally, catalyzes the CTP-dependent phosphorylation of riboflavin (vitamin B2) to form flavin mononucleotide (FMN). This chain is Riboflavin kinase (ribK), found in Halobacterium salinarum (strain ATCC 700922 / JCM 11081 / NRC-1) (Halobacterium halobium).